Reading from the N-terminus, the 411-residue chain is uncharacterized protein (411 aa).

2 disordered regions span residues 1–91 (METP…QDEE) and 253–280 (KGPL…AYSP). Residues 46 to 57 (ETTESADSENDM) show a composition bias toward acidic residues. The span at 74 to 86 (SNESFSSNQSTES) shows a compositional bias: low complexity. Positions 258-272 (RRNEEDENKPQEKRP) are enriched in basic and acidic residues. Residue Ser279 is modified to Phosphoserine.

In terms of tissue distribution, widely expressed, highest levels in cerebellum, brain cortex, hippocampus, pons, putamen and amygdala. Highly expressed in neurons, but also present in glial cells. Slightly higher expression in the dorsolateral prefrontal cortex of schizophrenic patients compared to control individuals.

The protein resides in the cytoplasm. This is an uncharacterized protein from Homo sapiens (Human).